The following is a 439-amino-acid chain: Dihydroorotase (439 aa).

The Zn(2+) site is built by H73 and H75. Substrate is bound by residues 75 to 77 (HLR) and N107. Residues D165, H192, and H245 each contribute to the Zn(2+) site. N291 serves as a coordination point for substrate. A Zn(2+)-binding site is contributed by D318. Residue D318 is part of the active site. Position 322 (H322) interacts with substrate.

Belongs to the metallo-dependent hydrolases superfamily. DHOase family. Class I DHOase subfamily. It depends on Zn(2+) as a cofactor.

The catalysed reaction is (S)-dihydroorotate + H2O = N-carbamoyl-L-aspartate + H(+). It functions in the pathway pyrimidine metabolism; UMP biosynthesis via de novo pathway; (S)-dihydroorotate from bicarbonate: step 3/3. Functionally, catalyzes the reversible cyclization of carbamoyl aspartate to dihydroorotate. The chain is Dihydroorotase from Syntrophobacter fumaroxidans (strain DSM 10017 / MPOB).